The following is a 453-amino-acid chain: Zinc finger and BTB domain-containing protein 44 (453 aa).

K4 participates in a covalent cross-link: Glycyl lysine isopeptide (Lys-Gly) (interchain with G-Cter in SUMO2). Positions 31 to 98 (CDITIRVQDR…AYTATLSINT (68 aa)) constitute a BTB domain. A phosphoserine mark is found at S135, S159, S161, S165, S191, S194, and S199. T200 carries the post-translational modification Phosphothreonine. Residues 241–265 (QPEKAKQAENTRTLELPGPSEAGRR) form a disordered region. A Glycyl lysine isopeptide (Lys-Gly) (interchain with G-Cter in SUMO2) cross-link involves residue K290. Disordered regions lie at residues 295–324 (SDEE…PGSE) and 336–368 (SSSI…EDDR). A compositionally biased stretch (low complexity) spans 304-318 (SQPVSASQSSLSDQQ). Over residues 352–361 (TLQSTSSTNA) the composition is skewed to polar residues. C2H2-type zinc fingers lie at residues 399–421 (FQCP…MLIH) and 427–449 (FQCD…RLKH).

It localises to the nucleus. This chain is Zinc finger and BTB domain-containing protein 44 (Zbtb44), found in Rattus norvegicus (Rat).